The chain runs to 87 residues: U15-lycotoxin-Ls1h (87 aa).

The first 20 residues, 1-20, serve as a signal peptide directing secretion; the sequence is MNSKIFAVLLLLGLLSCVLS. The 46-residue stretch at 21–66 folds into the WAP domain; it reads DQYCPKSSITACKKMNTRNDCCKDDDCTGGSWCCATPCGNFCKYPT. 5 disulfide bridges follow: cysteine 24–cysteine 54, cysteine 32–cysteine 58, cysteine 41–cysteine 53, cysteine 42–cysteine 80, and cysteine 47–cysteine 62.

It belongs to the venom protein 11 family. 01 (wap-1) subfamily. Contains 5 disulfide bonds. As to expression, expressed by the venom gland.

The protein localises to the secreted. Functionally, has antibacterial activity. The polypeptide is U15-lycotoxin-Ls1h (Lycosa singoriensis (Wolf spider)).